A 105-amino-acid chain; its full sequence is Large ribosomal subunit protein uL24 (105 aa).

The protein belongs to the universal ribosomal protein uL24 family. As to quaternary structure, part of the 50S ribosomal subunit.

One of two assembly initiator proteins, it binds directly to the 5'-end of the 23S rRNA, where it nucleates assembly of the 50S subunit. In terms of biological role, one of the proteins that surrounds the polypeptide exit tunnel on the outside of the subunit. This Xanthobacter autotrophicus (strain ATCC BAA-1158 / Py2) protein is Large ribosomal subunit protein uL24.